Consider the following 953-residue polypeptide: Pyruvate, phosphate dikinase, chloroplastic (953 aa).

The transit peptide at 1-77 (MMSSLSVEGM…VLNPVSPPVT (77 aa)) directs the protein to the chloroplast. Residues 55 to 74 (PELRSSGLTPPRAVLNPVSP) form a disordered region. Thr533 bears the Phosphothreonine; by PDRP1 mark. His535 serves as the catalytic Tele-phosphohistidine intermediate. Substrate is bound by residues Arg641, Arg698, Glu827, Gly848, Thr849, Asn850, and Asp851. A Mg(2+)-binding site is contributed by Glu827. Asp851 provides a ligand contact to Mg(2+). The active-site Proton donor is Cys913.

It belongs to the PEP-utilizing enzyme family. As to quaternary structure, homotetramer. The cofactor is Mg(2+). Phosphorylation of Thr-533 in the dark inactivates the enzyme. Dephosphorylation upon light stimulation reactivates the enzyme.

It is found in the plastid. The protein localises to the chloroplast. The enzyme catalyses pyruvate + phosphate + ATP = phosphoenolpyruvate + AMP + diphosphate + H(+). The protein operates within photosynthesis; C4 acid pathway. With respect to regulation, activated by light-induced dephosphorylation. Inhibited by dark-induced phosphorylation. Both reactions are catalyzed by PDRP1. Inactivated by cold due to the dissociation of the homotetramer. In terms of biological role, formation of phosphoenolpyruvate, which is the primary acceptor of CO(2) in C4 and some Crassulacean acid metabolism plants. The protein is Pyruvate, phosphate dikinase, chloroplastic of Flaveria bidentis (Coastal plain yellowtops).